We begin with the raw amino-acid sequence, 218 residues long: Akirin (218 aa).

Residues 96 to 150 (KAIPRSNDFDDDGDQRGDGCSSNYSKAYRAPSSPKSGSDSEGEAPSTSVTDRSSA) are disordered. Residues 128–147 (SPKSGSDSEGEAPSTSVTDR) show a composition bias toward polar residues.

This sequence belongs to the akirin family. In terms of assembly, interacts with hda-1, a component of the NuRD complex. Interacts with let-418, a component of the NuRD and MEC complexes. Interacts with the transcription factor ceh-18. Interacts with ima-2. In terms of tissue distribution, localizes to somatic tissues throughout the body, including muscle cells. Expressed in lateral epithelial seam cells, the hyp7 epidermal syncytium, and multiple head and tail neurons.

The protein resides in the nucleus. Molecular adapter that acts as a bridge between a variety of multiprotein complexes, and which is involved in antifungal innate immunity, development of the muscle and sister chromatid cohesion. Plays a role in antifungal innate immunity by acting as a bridge between components of the NuRD (Nucleosome Remodeling and Deacetylase) and MEC chromatin remodeling complexes. NuRD and MEC complexes bind to the promoters of antimicrobial peptide genes and may recruit other proteins such as ceh-18 to control gene expression in response to fungal infection. During meiotic prophase I, plays a role in the disassembly of synaptonemal complex proteins and in the regulation of chromosome condensation and segregation. Together with nuclear import receptor ima-2, required for the import and load of cohesin complex proteins in meiotic nuclei, possibly by acting as a bridge between ima-2 and cohesins. Required for embryonic development of muscle tissue. This is Akirin from Caenorhabditis elegans.